The primary structure comprises 405 residues: Diaminopimelate decarboxylase (405 aa).

N6-(pyridoxal phosphate)lysine is present on lysine 46. Pyridoxal 5'-phosphate is bound by residues glycine 225 and 259–262 (EPGR). Residues arginine 262, arginine 298, and tyrosine 302 each contribute to the substrate site. Cysteine 329 acts as the Proton donor in catalysis. Substrate-binding residues include glutamate 330 and tyrosine 358. Tyrosine 358 serves as a coordination point for pyridoxal 5'-phosphate.

It belongs to the Orn/Lys/Arg decarboxylase class-II family. LysA subfamily. Homodimer. Requires pyridoxal 5'-phosphate as cofactor.

It carries out the reaction meso-2,6-diaminopimelate + H(+) = L-lysine + CO2. It functions in the pathway amino-acid biosynthesis; L-lysine biosynthesis via DAP pathway; L-lysine from DL-2,6-diaminopimelate: step 1/1. Functionally, specifically catalyzes the decarboxylation of meso-diaminopimelate (meso-DAP) to L-lysine. The sequence is that of Diaminopimelate decarboxylase from Helicobacter pylori (Campylobacter pylori).